Consider the following 361-residue polypeptide: 3,6-anhydro-alpha-L-galactonate cycloisomerase (361 aa).

The Proton acceptor role is filled by Lys166. Asp195, Glu221, and Glu247 together coordinate Mg(2+). His297 (proton donor/acceptor) is an active-site residue.

This sequence belongs to the mandelate racemase/muconate lactonizing enzyme family. Mg(2+) is required as a cofactor.

The catalysed reaction is 3,6-anhydro-L-galactonate = 2-dehydro-3-deoxy-L-galactonate. Involved in the degradation of 3,6-anhydro-L-galactose, which is the major monomeric sugar of red macroalgae. Catalyzes the isomerization of 3,6-anhydrogalactonate (AHGA) to 2-keto-3-deoxy-galactonate (KDGal). The polypeptide is 3,6-anhydro-alpha-L-galactonate cycloisomerase (Streptomyces coelicolor (strain ATCC BAA-471 / A3(2) / M145)).